We begin with the raw amino-acid sequence, 154 residues long: Superoxide dismutase [Cu-Zn] (154 aa).

Cu cation is bound by residues histidine 47, histidine 49, and histidine 64. A disulfide bridge connects residues cysteine 58 and cysteine 147. Histidine 64, histidine 72, histidine 81, and aspartate 84 together coordinate Zn(2+). A Cu cation-binding site is contributed by histidine 121. Over residues 125–136 the composition is skewed to basic and acidic residues; that stretch reads DDLGKGGNEESL. Residues 125 to 144 are disordered; that stretch reads DDLGKGGNEESLKTGNAGPR. Arginine 144 serves as a coordination point for substrate.

This sequence belongs to the Cu-Zn superoxide dismutase family. In terms of assembly, homodimer. Requires Cu cation as cofactor. The cofactor is Zn(2+).

It localises to the cytoplasm. It carries out the reaction 2 superoxide + 2 H(+) = H2O2 + O2. Functionally, destroys radicals which are normally produced within the cells and which are toxic to biological systems. The sequence is that of Superoxide dismutase [Cu-Zn] (SOD1) from Candida glabrata (strain ATCC 2001 / BCRC 20586 / JCM 3761 / NBRC 0622 / NRRL Y-65 / CBS 138) (Yeast).